A 229-amino-acid chain; its full sequence is MEEGIKMGTKLTSLFKEGEKYQINTKYKELPIKTNLKLLWIDENMKLLGFSIGACVFKGAFTPGTEVYIKINGKYAYGKVFSCSNELVIEFKEIRKEPEFIRRRTVRVEPDPANPVVVELKVDSYSIKTKAKDISETGVGVILEKDKPESAEVIDIIQKNPNSWFDLYVHLPKHGTAHAKGRVRNLSIEEEGIYIRIGFEAEYSKEDREKVRRYVFERQQEIIKSLKML.

In terms of domain architecture, PilZ spans R102–E217.

This sequence to A.aeolicus aq_820 and aq_1211.

This is an uncharacterized protein from Aquifex aeolicus (strain VF5).